Reading from the N-terminus, the 246-residue chain is DNA repair protein RecO (246 aa).

The protein belongs to the RecO family.

Functionally, involved in DNA repair and RecF pathway recombination. This is DNA repair protein RecO from Methylorubrum extorquens (strain PA1) (Methylobacterium extorquens).